We begin with the raw amino-acid sequence, 320 residues long: 4-diphosphocytidyl-2-C-methyl-D-erythritol kinase (320 aa).

Lysine 26 is an active-site residue. An ATP-binding site is contributed by 111–121; it reads PVAGGMAGGSA. The active site involves aspartate 153.

Belongs to the GHMP kinase family. IspE subfamily.

It catalyses the reaction 4-CDP-2-C-methyl-D-erythritol + ATP = 4-CDP-2-C-methyl-D-erythritol 2-phosphate + ADP + H(+). It participates in isoprenoid biosynthesis; isopentenyl diphosphate biosynthesis via DXP pathway; isopentenyl diphosphate from 1-deoxy-D-xylulose 5-phosphate: step 3/6. Functionally, catalyzes the phosphorylation of the position 2 hydroxy group of 4-diphosphocytidyl-2C-methyl-D-erythritol. This is 4-diphosphocytidyl-2-C-methyl-D-erythritol kinase from Mycobacterium marinum (strain ATCC BAA-535 / M).